A 420-amino-acid chain; its full sequence is CinA-like protein (420 aa).

Belongs to the CinA family.

In Geotalea uraniireducens (strain Rf4) (Geobacter uraniireducens), this protein is CinA-like protein.